Reading from the N-terminus, the 208-residue chain is EF-hand protein 5 variant 1 (208 aa).

The segment at 1–34 is disordered; that stretch reads MQARGTVKVQGDAKVDGKMSTGQHSHHQHLNSTQ. EF-hand domains follow at residues 64–98, 99–134, 135–170, and 171–206; these read MAEGFYVLSGGYKKLFIPSKDVYALMQNVGMHLTE, EEFHDALRVIGQSEPQNADELSFSDFLLLMTREVDD, TMADELRSAFFHYDKYKTGYVTRKQFTELFATLGER, and STPEELEELLAVAEVDETDDKIDYNRFVNELTSRVN. Residues E118, D123, D148, T152, and Y154 each contribute to the Ca(2+) site.

The sequence is that of EF-hand protein 5 variant 1 from Trypanosoma cruzi.